Reading from the N-terminus, the 292-residue chain is Brix domain-containing protein ZK795.3 (292 aa).

One can recognise a Brix domain in the interval 78–259; it reads PKIVITTSRD…PYQIKLGTLE (182 aa).

The chain is Brix domain-containing protein ZK795.3 from Caenorhabditis elegans.